A 716-amino-acid chain; its full sequence is Cytoplasmic polyadenylation element-binding protein 3 (716 aa).

Basic and acidic residues predominate over residues 1–11 (MQDDLLMDKSK). Disordered stretches follow at residues 1–118 (MQDD…WSTG) and 162–209 (AQTQ…RSAA). Low complexity-rich tracts occupy residues 13–31 (QPQS…QQLQ) and 54–63 (SSAVPALSPA). Pro residues predominate over residues 91-100 (PQQPPPPQEP). Residues 107 to 118 (LSPSFGSTWSTG) are compositionally biased toward polar residues. Pro residues predominate over residues 169 to 186 (QPPPPAPQPPQPAQPPQA). The segment covering 187–209 (QPSQQRRSPASPSQAPYAQRSAA) has biased composition (low complexity). 3 positions are modified to phosphoserine: Ser194, Ser197, and Ser291. Asymmetric dimethylarginine is present on Arg309. Phosphoserine is present on residues Ser419 and Ser420. 2 consecutive RRM domains span residues 459–550 (RKVF…PWNL) and 567–649 (KTIF…PYVL).

Belongs to the RRM CPEB family. Following synaptic activity, aggregates to form amyloid-like oligomers. Aggregation requires an intact actin cytoskeleton. Interacts with STAT5B; this inhibits STAT5B-mediated transcriptional activation. Interacts with E3 ubiquitin-protein ligase NEURL1; this leads to monoubiquitination and activation of CPEB3. Interacts with CAPN2; this leads to cleavage of CPEB3. Interacts (via C-terminal RNA-binding region) with TOB1; TOB1 also binds CNOT7/CAF1 and recruits it to CPEB3 to form a ternary complex. Interacts with SUMO-conjugating enzyme UBC9. Interacts with IPO5; the interaction is enhanced in a RAN-regulated manner following neuronal stimulation and mediates CPEB3 nuclear import. Interacts with exportin XPO1/CRM1. Activated by NEURL1-mediated monoubiquitination, resulting in the growth of new dendritic spines and increased levels of GRIA1 and GRIA2. NEURL1-mediated monoubiquitination facilitates synaptic plasticity and hippocampal-dependent memory storage. In terms of processing, under basal unstimulated conditions when CPEB3 is mainly unaggregated, sumoylated and acts as a translational repressor. Following neuronal stimulation, becomes desumoylated and aggregated which is required for the translation of mRNA targets and for dendritic filopodia formation. Post-translationally, following neuronal stimulation, cleaved by CAPN2 which abolishes its translational repressor activity, leading to translation of CPEB3 target mRNAs. Phosphorylation is enhanced by neuronal stimulation. Highly expressed in brain (at protein level). In brain, expressed in the hippocampus, granule cells and interneurons of the cerebellum, and mitral cells of the olfactory bulb (at protein level). Detected in the spinal cord and in peripheral dorsal root ganglia (at protein level). In the retina, strongly expressed in the retinal ganglion layer and, to a lesser extent, in the inner margin of the inner nuclear layer with expression also detected in the inner and outer plexiform layers (at protein level). Highly expressed in brain and heart, less in liver, kidney, embryo, skeletal muscle, lung and ovary. Weakly expressed in granular cells of dentate gyrus and the pyramidal cells of CA3 and CA1 of the hippocampus.

It is found in the cytoplasm. Its subcellular location is the nucleus. The protein localises to the synapse. It localises to the cell projection. The protein resides in the dendrite. It is found in the postsynaptic density. Its function is as follows. Sequence-specific RNA-binding protein which acts as a translational repressor in the basal unstimulated state but, following neuronal stimulation, acts as a translational activator. In contrast to CPEB1, does not bind to the cytoplasmic polyadenylation element (CPE), a uridine-rich sequence element within the mRNA 3'-UTR, but binds to a U-rich loop within a stem-loop structure. Required for the consolidation and maintenance of hippocampal-based long term memory. In the basal state, binds to the mRNA 3'-UTR of the glutamate receptors GRIA1 and GRIA2 and negatively regulates their translation. Also represses the translation of DLG4, GRIN1 GRIN2A and GRIN2B. When activated, acts as a translational activator of GRIA1 and GRIA2. In the basal state, suppresses SUMO2 translation but activates it following neuronal stimulation. Binds to the 3'-UTR of TRPV1 mRNA and represses TRPV1 translation which is required to maintain normal thermoception. Binds actin mRNA, leading to actin translational repression in the basal state and to translational activation following neuronal stimulation. Negatively regulates target mRNA levels by binding to TOB1 which recruits CNOT7/CAF1 to a ternary complex and this leads to target mRNA deadenylation and decay. In addition to its role in translation, binds to and inhibits the transcriptional activation activity of STAT5B without affecting its dimerization or DNA-binding activity. This, in turn, represses transcription of the STAT5B target gene EGFR which has been shown to play a role in enhancing learning and memory performance. In contrast to CPEB1, CPEB2 and CPEB4, not required for cell cycle progression. In Mus musculus (Mouse), this protein is Cytoplasmic polyadenylation element-binding protein 3 (Cpeb3).